The chain runs to 231 residues: Probable GTP-binding protein EngB (231 aa).

Positions 51 to 231 constitute an EngB-type G domain; sequence DLSEIAFAGR…RAQLAALASP (181 aa). Residues 59-66, 86-90, 109-112, 176-179, and 210-212 each bind GTP; these read GRSNVGKS, GRTQE, DLPG, TKAD, and TSS. Positions 66 and 88 each coordinate Mg(2+).

It belongs to the TRAFAC class TrmE-Era-EngA-EngB-Septin-like GTPase superfamily. EngB GTPase family. Mg(2+) serves as cofactor.

Its function is as follows. Necessary for normal cell division and for the maintenance of normal septation. The chain is Probable GTP-binding protein EngB from Rhodospirillum rubrum (strain ATCC 11170 / ATH 1.1.1 / DSM 467 / LMG 4362 / NCIMB 8255 / S1).